Reading from the N-terminus, the 901-residue chain is Phosphatidylinositol 3-kinase catalytic subunit type 3 (901 aa).

The region spanning 21-189 (LQTNVQVKVA…DLLFKQVTRQ (169 aa)) is the C2 PI3K-type domain. The PIK helical domain maps to 302-527 (RHRQVKPNKQ…SKMYQNIQDR (226 aa)). The PI3K/PI4K catalytic domain occupies 607-886 (IPDTASFFKS…QIESSLNAKM (280 aa)). The tract at residues 613–619 (FFKSEMM) is G-loop. A catalytic loop region spans residues 755 to 763 (GLGDRHLDN). Residues 774–795 (HVDFGFILGRDPKPMPPPMKLT) are activation loop.

Belongs to the PI3/PI4-kinase family. In terms of assembly, interacts with bec-1. May interact with dyn-1. Requires Mn(2+) as cofactor. In terms of tissue distribution, ubiquitous.

The protein resides in the nucleus outer membrane. The protein localises to the cytoplasm. Its subcellular location is the cytoplasmic granule. It is found in the cell projection. It localises to the phagocytic cup. It carries out the reaction a 1,2-diacyl-sn-glycero-3-phospho-(1D-myo-inositol) + ATP = a 1,2-diacyl-sn-glycero-3-phospho-(1D-myo-inositol-3-phosphate) + ADP + H(+). Its activity is regulated as follows. Inhibited by wortmannin. Functionally, catalytic subunit of the PI3K complex that mediates formation of phosphatidylinositol 3-phosphate. Together with bec-1, mediates the production of phosphatidylinositol 3-phosphate on intracellular vesicles and thereby regulates membrane trafficking. Plays a role in endosome-to-Golgi retrograde transport of mig-14. Involved in clearance of apoptotic cell corpses by phagosomes. Phagosome maturation requires two sequential and non-overlapping pulses of phosphatidylinositol-3-phosphate (PI3P) on the vesicle surface which mediates recruitment of sortins snx-1 and lst-4 and small GTPases rab-5, rab-2 and rab-7, downstream of dynamin dyn-1. The first pulse is initiated by piki-1, then maintained by vps-34 which also produces the second pulse. Required for embryonic development. Together with bec-1, involved in L3/L4 larval molting stage probably by regulating cuticle shedding. Regulates the expansion of the nucleus outer membrane. Involved in the secretion and localization of lrp-1 at the apical surface of hyp7 syncytium. May regulate endocytosis in hypodermal cells. May play a role in the formation of gut granules (a lysosome-related organelle). Plays a role in germ stem cell proliferation during larval development. In Caenorhabditis elegans, this protein is Phosphatidylinositol 3-kinase catalytic subunit type 3.